The chain runs to 375 residues: All-trans-retinol dehydrogenase [NAD(+)] ADH1B (375 aa).

Serine 2 bears the N-acetylserine mark. A Phosphoserine modification is found at serine 23. Tyrosine 35 carries the phosphotyrosine modification. Zn(2+)-binding residues include cysteine 47, histidine 68, cysteine 98, cysteine 101, cysteine 104, cysteine 112, and cysteine 175. NAD(+) is bound by residues 200 to 205, aspartate 224, lysine 229, 293 to 295, and arginine 370; these read GLGGVG and VGV.

The protein belongs to the zinc-containing alcohol dehydrogenase family. In terms of assembly, homodimer or heterodimer of closely related subunits. Zn(2+) serves as cofactor.

Its subcellular location is the cytoplasm. It carries out the reaction all-trans-retinol + NAD(+) = all-trans-retinal + NADH + H(+). The catalysed reaction is all-trans-4-hydroxyretinol + NAD(+) = all-trans-4-hydroxyretinal + NADH + H(+). It catalyses the reaction all-trans-4-oxoretinol + NAD(+) = all-trans-4-oxoretinal + NADH + H(+). Functionally, catalyzes the NAD-dependent oxidation of all-trans-retinol and its derivatives such as all-trans-4-hydroxyretinol and may participate in retinoid metabolism. In vitro can also catalyze the NADH-dependent reduction of all-trans-retinal and its derivatives such as all-trans-4-oxoretinal. Catalyzes in the oxidative direction with higher efficiency. Has the same affinity for all-trans-4-hydroxyretinol and all-trans-4-oxoretinal. This is All-trans-retinol dehydrogenase [NAD(+)] ADH1B from Pan troglodytes (Chimpanzee).